The following is a 130-amino-acid chain: Small ribosomal subunit protein uS8 (130 aa).

Belongs to the universal ribosomal protein uS8 family. As to quaternary structure, part of the 30S ribosomal subunit. Contacts proteins S5 and S12.

Functionally, one of the primary rRNA binding proteins, it binds directly to 16S rRNA central domain where it helps coordinate assembly of the platform of the 30S subunit. This Actinobacillus pleuropneumoniae serotype 5b (strain L20) protein is Small ribosomal subunit protein uS8.